The chain runs to 696 residues: Catalase (696 aa).

Catalysis depends on residues His-64 and Asn-137. Residues 187–211 (SLAQGSQISSERGSPKAYSNTEPNK) are disordered. Positions 189–208 (AQGSQISSERGSPKAYSNTE) are enriched in polar residues. Residue Tyr-353 coordinates heme.

This sequence belongs to the catalase family. Heme is required as a cofactor.

The enzyme catalyses 2 H2O2 = O2 + 2 H2O. Occurs in almost all aerobically respiring organisms and serves to protect cells from the toxic effects of hydrogen peroxide. The sequence is that of Catalase from Penicillium janthinellum (Penicillium vitale).